Consider the following 383-residue polypeptide: Chaperone protein DnaJ (383 aa).

The region spanning 6–70 (DYYDVLGVGR…QKRAAYDQYG (65 aa)) is the J domain. The CR-type zinc finger occupies 140-222 (GKETKISYSR…CHGTGREEER (83 aa)). 8 residues coordinate Zn(2+): C153, C156, C170, C173, C196, C199, C210, and C213. CXXCXGXG motif repeat units follow at residues 153–160 (CHTCHGSG), 170–177 (CHKCHGAG), 196–203 (CDVCGGTG), and 210–217 (CDTCHGTG).

The protein belongs to the DnaJ family. In terms of assembly, homodimer. It depends on Zn(2+) as a cofactor.

Its subcellular location is the cytoplasm. Its function is as follows. Participates actively in the response to hyperosmotic and heat shock by preventing the aggregation of stress-denatured proteins and by disaggregating proteins, also in an autonomous, DnaK-independent fashion. Unfolded proteins bind initially to DnaJ; upon interaction with the DnaJ-bound protein, DnaK hydrolyzes its bound ATP, resulting in the formation of a stable complex. GrpE releases ADP from DnaK; ATP binding to DnaK triggers the release of the substrate protein, thus completing the reaction cycle. Several rounds of ATP-dependent interactions between DnaJ, DnaK and GrpE are required for fully efficient folding. Also involved, together with DnaK and GrpE, in the DNA replication of plasmids through activation of initiation proteins. This Latilactobacillus sakei (Lactobacillus sakei) protein is Chaperone protein DnaJ.